The sequence spans 892 residues: Alanine--tRNA ligase (892 aa).

His-593, His-597, Cys-694, and His-698 together coordinate Zn(2+).

Belongs to the class-II aminoacyl-tRNA synthetase family. It depends on Zn(2+) as a cofactor.

It is found in the cytoplasm. It carries out the reaction tRNA(Ala) + L-alanine + ATP = L-alanyl-tRNA(Ala) + AMP + diphosphate. Its function is as follows. Catalyzes the attachment of alanine to tRNA(Ala) in a two-step reaction: alanine is first activated by ATP to form Ala-AMP and then transferred to the acceptor end of tRNA(Ala). Also edits incorrectly charged Ser-tRNA(Ala) and Gly-tRNA(Ala) via its editing domain. The sequence is that of Alanine--tRNA ligase from Helicobacter hepaticus (strain ATCC 51449 / 3B1).